Here is a 252-residue protein sequence, read N- to C-terminus: 2,5-diamino-6-ribosylamino-4(3H)-pyrimidinone 5'-phosphate reductase (252 aa).

NADP(+) is bound by residues T80, D84, V166, and 189 to 193 (GGIVI).

This sequence belongs to the HTP reductase family. As to quaternary structure, homodimer.

The enzyme catalyses 2,5-diamino-6-(1-D-ribitylamino)pyrimidin-4(3H)-one 5'-phosphate + NADP(+) = 2,5-diamino-6-(1-D-ribosylamino)pyrimidin-4(3H)-one 5'-phosphate + NADPH + H(+). It carries out the reaction 2,5-diamino-6-(1-D-ribitylamino)pyrimidin-4(3H)-one 5'-phosphate + NAD(+) = 2,5-diamino-6-(1-D-ribosylamino)pyrimidin-4(3H)-one 5'-phosphate + NADH + H(+). The protein operates within cofactor biosynthesis; riboflavin biosynthesis. In terms of biological role, catalyzes an early step in riboflavin biosynthesis, the NADPH-dependent reduction of the ribose side chain of 2,5-diamino-6-ribosylamino-4(3H)-pyrimidinone 5'-phosphate, yielding 2,5-diamino-6-ribitylamino-4(3H)-pyrimidinone 5'-phosphate. This chain is 2,5-diamino-6-ribosylamino-4(3H)-pyrimidinone 5'-phosphate reductase (RIB7), found in Kluyveromyces lactis (strain ATCC 8585 / CBS 2359 / DSM 70799 / NBRC 1267 / NRRL Y-1140 / WM37) (Yeast).